The sequence spans 364 residues: Beta-parvin (364 aa).

Residues 1–57 (MSSAPRSPTPRPRRMKKDESFLGKLGGTLARKRRAREVSDLQEEGKNAINSPMSPAL) are disordered. The residue at position 7 (Ser7) is a Phosphoserine. A compositionally biased stretch (basic and acidic residues) spans 36–46 (REVSDLQEEGK). At Ser54 the chain carries Phosphoserine. Calponin-homology (CH) domains follow at residues 87 to 194 (KELV…MHFR) and 254 to 361 (SVVK…TKYK).

It belongs to the parvin family. As to quaternary structure, interacts with DYSF. Interacts with ILK, ARHGEF6, PXN (via LD motifs), ACTN2 and actin. Expressed predominantly in heart and skeletal muscle.

The protein localises to the cell junction. The protein resides in the focal adhesion. It is found in the cell membrane. Its subcellular location is the cytoplasm. It localises to the cytoskeleton. The protein localises to the cell projection. The protein resides in the lamellipodium. It is found in the myofibril. Its subcellular location is the sarcomere. It localises to the z line. Adapter protein that plays a role in integrin signaling via ILK and in activation of the GTPases CDC42 and RAC1 by guanine exchange factors, such as ARHGEF6. Is involved in the reorganization of the actin cytoskeleton and formation of lamellipodia. Plays a role in cell adhesion, cell spreading, establishment or maintenance of cell polarity, and cell migration. The protein is Beta-parvin (PARVB) of Homo sapiens (Human).